The following is a 257-amino-acid chain: NAD-dependent protein deacylase (257 aa).

Residues 1–252 form the Deacetylase sirtuin-type domain; it reads MLGHAAKLLA…LRRVKDIMAE (252 aa). Position 20–39 (20–39) interacts with NAD(+); it reads GAGISAESGIPTFRGRNGLW. Tyr64 and Arg67 together coordinate substrate. 98–101 contacts NAD(+); sequence QNVD. The active-site Proton acceptor is His116. Residues Cys124, Cys127, Cys151, and Cys154 each coordinate Zn(2+). NAD(+) contacts are provided by residues 191-193, 217-219, and Ala235; these read GTS and NVE.

It belongs to the sirtuin family. Class III subfamily. Requires Zn(2+) as cofactor.

The protein localises to the cytoplasm. The enzyme catalyses N(6)-acetyl-L-lysyl-[protein] + NAD(+) + H2O = 2''-O-acetyl-ADP-D-ribose + nicotinamide + L-lysyl-[protein]. It carries out the reaction N(6)-succinyl-L-lysyl-[protein] + NAD(+) + H2O = 2''-O-succinyl-ADP-D-ribose + nicotinamide + L-lysyl-[protein]. NAD-dependent lysine deacetylase and desuccinylase that specifically removes acetyl and succinyl groups on target proteins. Modulates the activities of several proteins which are inactive in their acylated form. Deacetylates the N-terminal lysine residue of Alba, the major archaeal chromatin protein and that, in turn, increases Alba's DNA binding affinity, thereby repressing transcription. In Thermococcus kodakarensis (strain ATCC BAA-918 / JCM 12380 / KOD1) (Pyrococcus kodakaraensis (strain KOD1)), this protein is NAD-dependent protein deacylase.